The sequence spans 229 residues: Large ribosomal subunit protein uL1 (229 aa).

It belongs to the universal ribosomal protein uL1 family. In terms of assembly, part of the 50S ribosomal subunit.

Functionally, binds directly to 23S rRNA. The L1 stalk is quite mobile in the ribosome, and is involved in E site tRNA release. In terms of biological role, protein L1 is also a translational repressor protein, it controls the translation of the L11 operon by binding to its mRNA. The protein is Large ribosomal subunit protein uL1 of Streptococcus pneumoniae (strain Taiwan19F-14).